Reading from the N-terminus, the 315-residue chain is D-alanine--D-alanine ligase (315 aa).

The ATP-grasp domain occupies K101 to E297. Residue K128–H181 coordinates ATP. Mg(2+) is bound by residues D249, E263, and N265.

Belongs to the D-alanine--D-alanine ligase family. Mg(2+) is required as a cofactor. Mn(2+) serves as cofactor.

The protein resides in the cytoplasm. It carries out the reaction 2 D-alanine + ATP = D-alanyl-D-alanine + ADP + phosphate + H(+). Its pathway is cell wall biogenesis; peptidoglycan biosynthesis. Functionally, cell wall formation. This is D-alanine--D-alanine ligase from Wolbachia pipientis wMel.